We begin with the raw amino-acid sequence, 399 residues long: S-adenosylmethionine synthase (399 aa).

Residue His17 participates in ATP binding. Residue Asp19 coordinates Mg(2+). Glu45 is a binding site for K(+). Glu58 and Gln101 together coordinate L-methionine. The tract at residues 101–111 is flexible loop; that stretch reads QSADIAMGVDQ. Residues 177–179, 244–245, Asp253, 259–260, Ala276, and Lys280 each bind ATP; these read DGK, RF, and RK. Asp253 contacts L-methionine. Lys284 is a binding site for L-methionine.

This sequence belongs to the AdoMet synthase family. Homotetramer; dimer of dimers. Requires Mg(2+) as cofactor. The cofactor is K(+).

The protein resides in the cytoplasm. The enzyme catalyses L-methionine + ATP + H2O = S-adenosyl-L-methionine + phosphate + diphosphate. Its pathway is amino-acid biosynthesis; S-adenosyl-L-methionine biosynthesis; S-adenosyl-L-methionine from L-methionine: step 1/1. Functionally, catalyzes the formation of S-adenosylmethionine (AdoMet) from methionine and ATP. The overall synthetic reaction is composed of two sequential steps, AdoMet formation and the subsequent tripolyphosphate hydrolysis which occurs prior to release of AdoMet from the enzyme. In Bacillus mycoides (strain KBAB4) (Bacillus weihenstephanensis), this protein is S-adenosylmethionine synthase.